We begin with the raw amino-acid sequence, 310 residues long: NADH-cytochrome b5 reductase 1 (310 aa).

A helical transmembrane segment spans residues 30–50 (WVPFAVALAAGFVAWKLSVGG). Residues 61 to 166 (NEFQNFVLKE…RGPKGAMVYT (106 aa)) form the FAD-binding FR-type domain. FAD-binding positions include 146–160 (TTLKVGDTMKVRGPK) and 172–209 (HIGMIAGGTGITPMLQIIKAIIRNRPRNGGNDTTQVDL).

This sequence belongs to the flavoprotein pyridine nucleotide cytochrome reductase family. As to quaternary structure, monomer. Component of the 2-(3-amino-3-carboxypropyl)histidine synthase complex composed of dph1, dph2, dph3 and a NADH-dependent reductase, predominantly cbr1. Requires FAD as cofactor.

It localises to the mitochondrion outer membrane. It carries out the reaction 2 Fe(III)-[cytochrome b5] + NADH = 2 Fe(II)-[cytochrome b5] + NAD(+) + H(+). The enzyme catalyses 2 Fe(3+)-[Dph3] + NADH = 2 Fe(2+)-[Dph3] + NAD(+) + H(+). It functions in the pathway protein modification; peptidyl-diphthamide biosynthesis. In terms of biological role, NADH-dependent reductase for dph3 and cytochrome b5. Required for the first step of diphthamide biosynthesis, a post-translational modification of histidine which occurs in elongation factor 2. Dph1 and dph2 transfer a 3-amino-3-carboxypropyl (ACP) group from S-adenosyl-L-methionine (SAM) to a histidine residue, the reaction is assisted by a reduction system comprising dph3 and a NADH-dependent reductase, predominantly cbr1. By reducing dph3, also involved in the formation of the tRNA wobble base modification mcm5s 2U (5-methoxycarbonylmethyl-2-thiouridine), mediated by the elongator complex. The cytochrome b5/NADH cytochrome b5 reductase electron transfer system supports the catalytic activity of several sterol biosynthetic enzymes. This chain is NADH-cytochrome b5 reductase 1 (cbr1), found in Emericella nidulans (strain FGSC A4 / ATCC 38163 / CBS 112.46 / NRRL 194 / M139) (Aspergillus nidulans).